The chain runs to 489 residues: MFALTAYRLRCAAWLLATGIFLLLAGCSEAKAPTALERVQKEGVLRVITRNSPATYFQDRNGETGFEYELAKRFAERLGVELKIETADNLDDLYAQLSREGGPALAAAGLTPGREDDASVRYSHTYLDVTPQIIYRNGQQRPTRPEDLVGKRIMVLKGSSHAEQLAELKKQYPELKYEESDAVEVVDLLRMVDVGDIDLTLVDSNELAMNQVYFPNVRVAFDFGEARGLAWALPGGDDSLMNEVNAFLDQAKKEGLLQRLKDRYYGHVDVLGYVGAYTFAQHLQQRLPRYESHFKQSGKQLDTDWRLLAAIGYQESLWQPGATSKTGVRGLMMLTNRTAQAMGVSNRLDPKQSIQGGSKYFVQIRSELPESIKEPDRSWFALAAYNIGGAHLEDARKMAEKEGLNPNKWLDVKKMLPRLAQKQWYAKTRYGYARGGETVHFVQNVRRYYDILTWVTQPQMEGSQIAESGLHLPGVNKTRPEEDSGDEKL.

The first 32 residues, 1–32 (MFALTAYRLRCAAWLLATGIFLLLAGCSEAKA), serve as a signal peptide directing secretion. The non-LT domain stretch occupies residues 33–268 (PTALERVQKE…RLKDRYYGHV (236 aa)). An LT domain region spans residues 269–489 (DVLGYVGAYT…PEEDSGDEKL (221 aa)). The active site involves E315. The tract at residues 466–489 (AESGLHLPGVNKTRPEEDSGDEKL) is disordered. Residues 478–489 (TRPEEDSGDEKL) are compositionally biased toward basic and acidic residues.

It in the N-terminal section; belongs to the bacterial solute-binding protein 3 family. This sequence in the C-terminal section; belongs to the transglycosylase Slt family.

It is found in the cell outer membrane. The enzyme catalyses Exolytic cleavage of the (1-&gt;4)-beta-glycosidic linkage between N-acetylmuramic acid (MurNAc) and N-acetylglucosamine (GlcNAc) residues in peptidoglycan, from either the reducing or the non-reducing ends of the peptidoglycan chains, with concomitant formation of a 1,6-anhydrobond in the MurNAc residue.. Functionally, murein-degrading enzyme that degrades murein glycan strands and insoluble, high-molecular weight murein sacculi, with the concomitant formation of a 1,6-anhydromuramoyl product. Lytic transglycosylases (LTs) play an integral role in the metabolism of the peptidoglycan (PG) sacculus. Their lytic action creates space within the PG sacculus to allow for its expansion as well as for the insertion of various structures such as secretion systems and flagella. This is Membrane-bound lytic murein transglycosylase F from Pseudomonas aeruginosa (strain UCBPP-PA14).